The primary structure comprises 452 residues: MKETIVAQATAPGRGGIGILRVSGPLATKVAQAILGKCPKPRMADYLPFKDADGTILDQGIALYFKSPNSFTGEDVLELQGHGGQVVLDLLLKRILQIDGIRLARPGEFSEQAFLNDKLDLAQAEAIADLIDATSEQAVRSALKSLQGEFSKKVNELVDSVIYLRTYVEASIDFPDEEIDFLADGKIEANLRGIINQLEDVRSEAKQGSILREGMKVVIAGRPNAGKSSLLNALAGREAAIVTDIAGTTRDVLREHIHIDGMPLHIIDTAGLRDAIDEVERIGISRAWTEIEQADRIILMLDSSDPESADLSKVRSEFLAKLPSTLPVTIVRNKIDLNGEQASESEQGGYQMISLSAQTHDGVQLLREHLKQAMGFQTGMEGGFLARRRHLDALDKAAEHLQIGLVQLTEFHAGELLAEELRLVQSYLSEITGQFTSDDLLGNIFSSFCIGK.

3 residues coordinate (6S)-5-formyl-5,6,7,8-tetrahydrofolate: Arg-21, Glu-78, and Lys-118. A TrmE-type G domain is found at 214–375 (GMKVVIAGRP…LREHLKQAMG (162 aa)). A K(+)-binding site is contributed by Asn-224. Residues 224–229 (NAGKSS), 243–249 (TDIAGTT), and 268–271 (DTAG) contribute to the GTP site. Ser-228 serves as a coordination point for Mg(2+). Positions 243, 245, and 248 each coordinate K(+). Thr-249 contacts Mg(2+). Lys-452 contacts (6S)-5-formyl-5,6,7,8-tetrahydrofolate.

This sequence belongs to the TRAFAC class TrmE-Era-EngA-EngB-Septin-like GTPase superfamily. TrmE GTPase family. In terms of assembly, homodimer. Heterotetramer of two MnmE and two MnmG subunits. K(+) serves as cofactor.

The protein resides in the cytoplasm. Its function is as follows. Exhibits a very high intrinsic GTPase hydrolysis rate. Involved in the addition of a carboxymethylaminomethyl (cmnm) group at the wobble position (U34) of certain tRNAs, forming tRNA-cmnm(5)s(2)U34. The polypeptide is tRNA modification GTPase MnmE (Haemophilus influenzae (strain ATCC 51907 / DSM 11121 / KW20 / Rd)).